We begin with the raw amino-acid sequence, 238 residues long: Putative csd-like protein HI_1343 (238 aa).

An N6-(pyridoxal phosphate)lysine modification is found at K146.

The protein belongs to the class-V pyridoxal-phosphate-dependent aminotransferase family. Csd subfamily.

The chain is Putative csd-like protein HI_1343 from Haemophilus influenzae (strain ATCC 51907 / DSM 11121 / KW20 / Rd).